A 363-amino-acid polypeptide reads, in one-letter code: Protein TAX-1 (363 aa).

A required for localization to the flagellum and for flagellar motility region spans residues 129-363 (RYGNAEEILS…IPFRGVAAEQ (235 aa)). TPR repeat units lie at residues 157–190 (AELH…LSVM) and 199–232 (TFAY…WLKH).

As to quaternary structure, interacts with TTC29.

The protein localises to the cytoplasm. It is found in the cytoskeleton. Its subcellular location is the flagellum axoneme. In terms of biological role, required for flagellum motility. The protein is Protein TAX-1 of Trypanosoma brucei brucei (strain 927/4 GUTat10.1).